A 443-amino-acid chain; its full sequence is Putative metabolite transport protein YaaU (443 aa).

Residues 1–18 (MQPSRNFDDLKFSSIHRR) are Cytoplasmic-facing. Residues 19-39 (ILLWGSGGPFLDGYVLVMIGV) form a helical membrane-spanning segment. The Periplasmic segment spans residues 40 to 53 (ALEQLTPALKLDAD). Residues 54–74 (WIGLLGAGTLAGLFVGTSLFG) form a helical membrane-spanning segment. The Cytoplasmic portion of the chain corresponds to 75 to 84 (YISDKVGRRK). A helical membrane pass occupies residues 85–105 (MFLIDIIAIGVISVATMFVSS). The Periplasmic portion of the chain corresponds to 106–113 (PVELLVMR). A helical membrane pass occupies residues 114–134 (VLIGIVIGADYPIATSMITEF). Residues 135–145 (SSTRQRAFSIS) lie on the Cytoplasmic side of the membrane. A helical transmembrane segment spans residues 146-166 (FIAAMWYVGATCADLVGYWLY). At 167 to 173 (DVEGGWR) the chain is on the periplasmic side. Residues 174–194 (WMLGSAAIPCLLILIGRFELP) traverse the membrane as a helical segment. The Cytoplasmic portion of the chain corresponds to 195 to 241 (ESPRWLLRKGRVKECEEMMIKLFGEPVAFDEEQPQQTRFRDLFNRRH). A helical membrane pass occupies residues 242 to 262 (FPFVLFVAAIWTCQVIPMFAI). Residues 263–282 (YTFGPQIVGLLGLGVGKNAA) lie on the Periplasmic side of the membrane. Residues 283-303 (LGNVVISLFFMLGCIPPMLWL) traverse the membrane as a helical segment. Residues 304 to 309 (NTAGRR) are Cytoplasmic-facing. A helical transmembrane segment spans residues 310-329 (PLLIGSFAMMTLALAVLGLI). Residues 330 to 334 (PDMGI) lie on the Periplasmic side of the membrane. The helical transmembrane segment at 335-357 (WLVVMAFAVYAFFSGGPGNLQWL) threads the bilayer. Over 358 to 373 (YPNELFPTDIRASAVG) the chain is Cytoplasmic. Residues 374-394 (VIMSLSRIGTIVSTWALPIFI) traverse the membrane as a helical segment. The Periplasmic segment spans residues 395-401 (NNYGISN). A helical transmembrane segment spans residues 402-422 (TMLMGAGISLFGLLISVAFAP). The Cytoplasmic portion of the chain corresponds to 423-443 (ETRGMSLAQTSNMTIRGQRMG).

Belongs to the major facilitator superfamily. Sugar transporter (TC 2.A.1.1) family.

Its subcellular location is the cell inner membrane. In Escherichia coli (strain K12), this protein is Putative metabolite transport protein YaaU (yaaU).